The primary structure comprises 740 residues: Eukaryotic translation initiation factor 3 subunit B (740 aa).

Residues Met-1–Glu-10 are compositionally biased toward polar residues. The tract at residues Met-1–Asp-22 is disordered. The segment covering Leu-13–Asp-22 has biased composition (acidic residues). In terms of domain architecture, RRM spans Thr-40 to Asp-126. WD repeat units follow at residues Ala-193–Gln-230, Pro-232–Val-289, Glu-302–Lys-343, Ile-513–Glu-556, and Val-571–Ala-609. A disordered region spans residues Asp-695–Glu-721.

It belongs to the eIF-3 subunit B family. Component of the eukaryotic translation initiation factor 3 (eIF-3) complex.

It is found in the cytoplasm. In terms of biological role, RNA-binding component of the eukaryotic translation initiation factor 3 (eIF-3) complex, which is involved in protein synthesis of a specialized repertoire of mRNAs and, together with other initiation factors, stimulates binding of mRNA and methionyl-tRNAi to the 40S ribosome. The eIF-3 complex specifically targets and initiates translation of a subset of mRNAs involved in cell proliferation. The chain is Eukaryotic translation initiation factor 3 subunit B (prt1) from Aspergillus niger (strain ATCC MYA-4892 / CBS 513.88 / FGSC A1513).